The chain runs to 620 residues: Packaging protein UL32 homolog (620 aa).

12 residues coordinate Zn(2+): Cys-100, Cys-103, His-180, Cys-186, Cys-306, Cys-307, Cys-433, Cys-436, His-518, Cys-525, Cys-568, and His-605. Zinc finger regions lie at residues 100 to 186 (CLIC…LHVC), 306 to 605 (CCER…LRRH), and 433 to 525 (CVLC…DPMC).

The protein belongs to the herpesviridae UL32 protein family.

Its subcellular location is the host cytoplasm. The protein resides in the host nucleus. Its function is as follows. Plays a role in efficient localization of neo-synthesized capsids to nuclear replication compartments, thereby controlling cleavage and packaging of virus genomic DNA. This Equus caballus (Horse) protein is Packaging protein UL32 homolog.